Consider the following 410-residue polypeptide: Solute carrier family 52, riboflavin transporter, member 3 (410 aa).

Helical transmembrane passes span 3–23 (ILIY…INGL), 40–60 (LPSY…LVTL), and 73–93 (VVIY…AFFL). Residue asparagine 157 is glycosylated (N-linked (GlcNAc...) asparagine). 6 helical membrane-spanning segments follow: residues 158–178 (FTTE…LAAF), 239–259 (FQLT…NGLL), 277–297 (LSAA…MFFP), 301–321 (LVFL…NMAM), 334–354 (ALGE…LSYV), and 369–389 (ALVW…VIMF).

The protein belongs to the riboflavin transporter family.

Its subcellular location is the cell membrane. The catalysed reaction is riboflavin(in) = riboflavin(out). Plasma membrane transporter mediating the uptake by cells of the water soluble vitamin B2/riboflavin that plays a key role in biochemical oxidation-reduction reactions of the carbohydrate, lipid, and amino acid metabolism. In Osmerus mordax (Rainbow smelt), this protein is Solute carrier family 52, riboflavin transporter, member 3 (slc52a3).